The following is a 224-amino-acid chain: 7-cyano-7-deazaguanine synthase (224 aa).

8-18 contacts ATP; it reads LSGGMDSAAVI. Residues cysteine 186, cysteine 196, cysteine 199, and cysteine 202 each coordinate Zn(2+).

It belongs to the QueC family. Zn(2+) is required as a cofactor.

It carries out the reaction 7-carboxy-7-deazaguanine + NH4(+) + ATP = 7-cyano-7-deazaguanine + ADP + phosphate + H2O + H(+). It participates in purine metabolism; 7-cyano-7-deazaguanine biosynthesis. Functionally, catalyzes the ATP-dependent conversion of 7-carboxy-7-deazaguanine (CDG) to 7-cyano-7-deazaguanine (preQ(0)). This Xanthomonas euvesicatoria pv. vesicatoria (strain 85-10) (Xanthomonas campestris pv. vesicatoria) protein is 7-cyano-7-deazaguanine synthase.